Reading from the N-terminus, the 97-residue chain is HssA/B-like protein 44 (97 aa).

2 disordered regions span residues 1–22 (MTLF…SSIA) and 62–97 (ASTS…CGCN). Over residues 72–84 (RPGRGHGGPHGHG) the composition is skewed to basic residues. The segment covering 85 to 97 (RGGSGSGSSCGCN) has biased composition (gly residues).

This sequence belongs to the hssA/B family.

The chain is HssA/B-like protein 44 (hssl44) from Dictyostelium discoideum (Social amoeba).